The chain runs to 359 residues: Dihydroorotate dehydrogenase (quinone) (359 aa).

FMN is bound by residues 65–69 (AGLDK) and T89. Residue K69 coordinates substrate. 114–118 (NRLGF) is a substrate binding site. FMN contacts are provided by N149 and N182. N182 lines the substrate pocket. Catalysis depends on S185, which acts as the Nucleophile. N187 contacts substrate. Residues K233 and T261 each contribute to the FMN site. 262–263 (NT) is a binding site for substrate. FMN is bound by residues G284, G313, and 334–335 (YT).

The protein belongs to the dihydroorotate dehydrogenase family. Type 2 subfamily. In terms of assembly, monomer. FMN serves as cofactor.

The protein resides in the cell membrane. The enzyme catalyses (S)-dihydroorotate + a quinone = orotate + a quinol. It participates in pyrimidine metabolism; UMP biosynthesis via de novo pathway; orotate from (S)-dihydroorotate (quinone route): step 1/1. Catalyzes the conversion of dihydroorotate to orotate with quinone as electron acceptor. The polypeptide is Dihydroorotate dehydrogenase (quinone) (Paracidovorax citrulli (strain AAC00-1) (Acidovorax citrulli)).